The chain runs to 1131 residues: Chitin synthase 1 (1131 aa).

Residues 1–20 (MSDQNNRSRNEYHSNRKNEP) are compositionally biased toward basic and acidic residues. The disordered stretch occupies residues 1–22 (MSDQNNRSRNEYHSNRKNEPSY). Ser-34, Ser-35, Ser-270, Ser-299, and Ser-318 each carry phosphoserine. Residues 282 to 305 (YLHDDSRPVNDGKEELDSVKSGYS) are disordered. Thr-328 is modified (phosphothreonine). Ser-358 carries the post-translational modification Phosphoserine. Transmembrane regions (helical) follow at residues 795-815 (FFYLFFNTLISWFSLSSFFLV), 833-853 (VLSVIFLWLYGICTLSTFILS), 866-886 (VLTCVIFAVMMIYMIFCSIFM), 914-934 (IVISLGSTYCLYLISSIIYLQ), 942-962 (FIQYILLSPSYINVLNIYAFC), 1042-1062 (LVIIFWVITNFIIVAVVLETG), and 1101-1121 (ILWLVALSALIRFIGCSIYMI).

It belongs to the chitin synthase family.

It is found in the cell membrane. It carries out the reaction [(1-&gt;4)-N-acetyl-beta-D-glucosaminyl](n) + UDP-N-acetyl-alpha-D-glucosamine = [(1-&gt;4)-N-acetyl-beta-D-glucosaminyl](n+1) + UDP + H(+). Its activity is regulated as follows. Requires proteolytic activation. Functionally, polymerizes chitin, a structural polymer of the cell wall and septum, by transferring the sugar moiety of UDP-GlcNAc to the non-reducing end of the growing chitin polymer. Required for mitotic division septum formation during adverse conditions. The chain is Chitin synthase 1 (CHS1) from Saccharomyces cerevisiae (strain ATCC 204508 / S288c) (Baker's yeast).